The primary structure comprises 200 residues: Non-specific lipid transfer protein GPI-anchored 16 (200 aa).

The N-terminal stretch at 1–20 (MEGLTLIVVMMSSFMLGGQG) is a signal peptide. 4 cysteine pairs are disulfide-bonded: cysteine 27–cysteine 72, cysteine 38–cysteine 56, cysteine 57–cysteine 98, and cysteine 70–cysteine 107. Asparagine 87 carries N-linked (GlcNAc...) asparagine glycosylation. The disordered stretch occupies residues 134–182 (SPGASKAAGTTPTQAPAPDTPADGPTGPTTKSGIRPVDQPMQPTGLAQS). Positions 140–163 (AAGTTPTQAPAPDTPADGPTGPTT) are enriched in low complexity. A lipid anchor (GPI-anchor amidated threonine) is attached at threonine 177. Residues 178–200 (GLAQSSTSPFLPLLFISLILLNL) constitute a propeptide, removed in mature form.

The protein belongs to the plant LTP family. As to expression, expressed in seedlings, preferentially in hypocotyls and roots. Also observed in siliques.

It is found in the cell membrane. Essential protein involved in female gametophyte development. Probable lipid transfer protein. This is Non-specific lipid transfer protein GPI-anchored 16 from Arabidopsis thaliana (Mouse-ear cress).